The chain runs to 111 residues: Nucleoid-associated protein Teth514_0034 (111 aa).

It belongs to the YbaB/EbfC family. In terms of assembly, homodimer.

It localises to the cytoplasm. The protein resides in the nucleoid. Functionally, binds to DNA and alters its conformation. May be involved in regulation of gene expression, nucleoid organization and DNA protection. The protein is Nucleoid-associated protein Teth514_0034 of Thermoanaerobacter sp. (strain X514).